A 166-amino-acid polypeptide reads, in one-letter code: NADH-quinone oxidoreductase subunit A (166 aa).

3 helical membrane-spanning segments follow: residues 16 to 36, 68 to 88, and 98 to 118; these read FAVF…GAYF, FYLV…LYAW, and IGFI…FYLV. Residues 141–166 are disordered; sequence RYASSHPQDISQELSVAGSQQANESR.

It belongs to the complex I subunit 3 family. As to quaternary structure, NDH-1 is composed of 13 different subunits. Subunits NuoA, H, J, K, L, M, N constitute the membrane sector of the complex.

It localises to the cell inner membrane. It catalyses the reaction a quinone + NADH + 5 H(+)(in) = a quinol + NAD(+) + 4 H(+)(out). In terms of biological role, NDH-1 shuttles electrons from NADH, via FMN and iron-sulfur (Fe-S) centers, to quinones in the respiratory chain. The immediate electron acceptor for the enzyme in this species is believed to be ubiquinone. Couples the redox reaction to proton translocation (for every two electrons transferred, four hydrogen ions are translocated across the cytoplasmic membrane), and thus conserves the redox energy in a proton gradient. This Yersinia pseudotuberculosis serotype IB (strain PB1/+) protein is NADH-quinone oxidoreductase subunit A.